Reading from the N-terminus, the 184-residue chain is Protein Syd (184 aa).

Belongs to the Syd family.

It is found in the cell inner membrane. Its function is as follows. Interacts with the SecY protein in vivo. May bind preferentially to an uncomplexed state of SecY, thus functioning either as a chelating agent for excess SecY in the cell or as a regulatory factor that negatively controls the translocase function. This is Protein Syd from Psychromonas ingrahamii (strain DSM 17664 / CCUG 51855 / 37).